The following is a 653-amino-acid chain: Beta-galactosidase-1-like protein 3 (653 aa).

E227 acts as the Proton donor in catalysis. E301 (nucleophile) is an active-site residue.

The protein belongs to the glycosyl hydrolase 35 family.

In Homo sapiens (Human), this protein is Beta-galactosidase-1-like protein 3 (GLB1L3).